A 353-amino-acid chain; its full sequence is 2-oxoglutarate-dependent dioxygenase phqC (353 aa).

The 117-residue stretch at 199–315 folds into the Fe2OG dioxygenase domain; sequence CASELRLNNY…RRSCAFFLKA (117 aa). Residues His-227, Asp-229, and His-287 each contribute to the Fe cation site. Arg-302 serves as a coordination point for 2-oxoglutarate.

This sequence belongs to the iron/ascorbate-dependent oxidoreductase family. Requires Fe(2+) as cofactor.

It participates in alkaloid biosynthesis. 2-oxoglutarate-dependent dioxygenase; part of the gene cluster that mediates the biosynthesis of paraherquamide, a fungal indole alkaloid that belongs to a family of natural products containing a characteristic bicyclo[2.2.2]diazaoctane core. The first steps in the biosynthesis of paraherquamide is the production of the beta-methyl-proline precursor from L-isoleucine. They require oxidation of a terminally hydroxylated L-isoleucine to the corresponding aldehyde by enzymes which have still to be identified. Spontaneous cyclization and dehydration would yield the 4-methyl pyrolline-5-carboxylic acid, which is then reduced by the pyrroline-5-carboxylate reductase phqD leading to the beta-methyl-proline precursor. The next step of paraherquamide biosynthesis involves coupling of beta-methyl-proline and L-tryptophan by the bimodular NRPS phqB, to produce a monooxopiperazine intermediate. The reductase (R) domain of phqB utilizes NADPH for hydride transfer to reduce the thioester bond of the T domain-tethered linear dipeptide to a hemithioaminal intermediate, which spontaneously cleaves the C-S bond to release the aldehyde product. This compound undergoes spontaneous cyclization and dehydration to give a dienamine which is reverse prenylated at C-2 by the reverse prenyltransferase phqJ. The other prenyltransferase present in the cluster, phqI may be a redundant gene in the pathway. During biosynthetic assembly, the key step to produce the polycyclic core is catalyzed by the bifunctional reductase and intramolecular [4+2] Diels-Alderase, phqE, resulting in formation of the [2.2.2] diazaoctane intermediate preparaherquamide. Following formation of preparaherquamide, an indole 2,3-epoxidation-initiated pinacol-like rearrangement is catalyzed by the phqK FAD-dependent monooxygenase. The prenyltransferase phqA, the cytochrome P450 monooxygenase phqL, and the FAD-linked oxidoreductase phqH (or the cytochrome P450 monooxygenase phqM), are proposed to be involved in the formation of the pyran ring. The FAD-dependent monooxygenase phqK is likely responsible for generation of the spiro-oxindole, and the N-methylation is likely mediated by the phqN methyltransferase leading to the isolable natural product paraherquamide F. However, the order of these biosynthetic steps has still to be determined. In late-stage paraherquamide biosynthesis, the third P450 monooxygenase, phqO, is probably responsible for the C-14 hydroxylation, transforming paraherquamide F to paraherquamide G, and paraherquamide E to the final product paraherquamide A. The expansion from the 6-membered ring pyran (in paraherquamides F and G) to the 7-membered dioxepin ring (in paraherquamides A and E) represents a poorly understood but intriguing process that probably involves the 2-oxoglutarate-dependent dioxygenase phqC. Finally, the remaining members of the paraherquamide cluster, including phqI as well as phqM (or phqH), do not have a clearly prescribed role and appear to be redundant. This Penicillium fellutanum protein is 2-oxoglutarate-dependent dioxygenase phqC.